The following is a 190-amino-acid chain: Probable nicotinate-nucleotide adenylyltransferase (190 aa).

The protein belongs to the NadD family.

The catalysed reaction is nicotinate beta-D-ribonucleotide + ATP + H(+) = deamido-NAD(+) + diphosphate. It functions in the pathway cofactor biosynthesis; NAD(+) biosynthesis; deamido-NAD(+) from nicotinate D-ribonucleotide: step 1/1. In terms of biological role, catalyzes the reversible adenylation of nicotinate mononucleotide (NaMN) to nicotinic acid adenine dinucleotide (NaAD). This is Probable nicotinate-nucleotide adenylyltransferase from Staphylococcus saprophyticus subsp. saprophyticus (strain ATCC 15305 / DSM 20229 / NCIMB 8711 / NCTC 7292 / S-41).